Reading from the N-terminus, the 515-residue chain is Endoglucanase 2 (515 aa).

A signal peptide spans 1 to 31; that stretch reads MVAKPRSRCCCCSVFIGVIILIAIIIAVIFT. Asparagine 37 carries N-linked (GlcNAc...) asparagine glycosylation. Catalysis depends on aspartate 100, which acts as the Nucleophile. Asparagine 250 carries N-linked (GlcNAc...) asparagine glycosylation. The active site involves histidine 433. Asparagine 475 is a glycosylation site (N-linked (GlcNAc...) asparagine). Aspartate 480 is an active-site residue. N-linked (GlcNAc...) asparagine glycosylation occurs at asparagine 483. Glutamate 489 is an active-site residue.

This sequence belongs to the glycosyl hydrolase 9 (cellulase E) family.

The protein resides in the secreted. It carries out the reaction Endohydrolysis of (1-&gt;4)-beta-D-glucosidic linkages in cellulose, lichenin and cereal beta-D-glucans.. This Arabidopsis thaliana (Mouse-ear cress) protein is Endoglucanase 2.